The primary structure comprises 174 residues: WAP four-disulfide core domain protein 2 (174 aa).

Positions M1–A25 are cleaved as a signal peptide. A WAP 1 domain is found at D29 to N74. 4 disulfides stabilise this stretch: C36–C62, C45–C66, C49–C61, and C55–C70. Positions S68–A117 are disordered. The segment covering G83–A98 has biased composition (polar residues). The WAP 2 domain occupies V125–K173. 4 cysteine pairs are disulfide-bonded: C132-C160, C143-C164, C147-C159, and C153-C169.

Homotrimer; disulfide-linked.

Its subcellular location is the secreted. Its function is as follows. Broad range protease inhibitor. This Mus musculus (Mouse) protein is WAP four-disulfide core domain protein 2 (Wfdc2).